The following is a 152-amino-acid chain: Ubiquitin-conjugating enzyme E2 B (152 aa).

One can recognise a UBC core domain in the interval 4–150 (PARRRLMRDF…VSAIVEQSWN (147 aa)). Residue C88 is the Glycyl thioester intermediate of the active site.

It belongs to the ubiquitin-conjugating enzyme family. Interacts with RAD18, UBR2 and WAC.

Its subcellular location is the cell membrane. It localises to the nucleus. The enzyme catalyses S-ubiquitinyl-[E1 ubiquitin-activating enzyme]-L-cysteine + [E2 ubiquitin-conjugating enzyme]-L-cysteine = [E1 ubiquitin-activating enzyme]-L-cysteine + S-ubiquitinyl-[E2 ubiquitin-conjugating enzyme]-L-cysteine.. Its pathway is protein modification; protein ubiquitination. In terms of biological role, E2 ubiquitin-conjugating enzyme that accepts ubiquitin from the ubiquitin-activating enzyme E1 and transfers it to a E3 ubiquitin-protein ligase. In vitro catalyzes 'Lys-11'-, as well as 'Lys-48'- and 'Lys-63'-linked polyubiquitination. Together with the E3 enzyme BRE1 (RNF20 and/or RNF40), plays a role in transcription regulation by catalyzing the monoubiquitination of histone H2B at 'Lys-120' to form H2BK120ub1. H2BK120ub1 gives a specific tag for epigenetic transcriptional activation, elongation by RNA polymerase II, telomeric silencing, and is also a prerequisite for H3K4me and H3K79me formation. May play a role in DNA repair. Associates to the E3 ligase RAD18 to form the UBE2B-RAD18 ubiquitin ligase complex involved in mono-ubiquitination of DNA-associated PCNA on 'Lys-164'. In association with the E3 enzyme UBR4, is involved in N-end rule-dependent protein degradation. May be involved in neurite outgrowth. This Bos taurus (Bovine) protein is Ubiquitin-conjugating enzyme E2 B (UBE2B).